The sequence spans 316 residues: tRNA dimethylallyltransferase (316 aa).

17–24 (GPTASGKT) is an ATP binding site. 19-24 (TASGKT) provides a ligand contact to substrate. Interaction with substrate tRNA regions lie at residues 42–45 (DSAL), 166–170 (QRLSR), and 247–252 (RCVGYR).

Belongs to the IPP transferase family. In terms of assembly, monomer. Requires Mg(2+) as cofactor.

It carries out the reaction adenosine(37) in tRNA + dimethylallyl diphosphate = N(6)-dimethylallyladenosine(37) in tRNA + diphosphate. Catalyzes the transfer of a dimethylallyl group onto the adenine at position 37 in tRNAs that read codons beginning with uridine, leading to the formation of N6-(dimethylallyl)adenosine (i(6)A). The sequence is that of tRNA dimethylallyltransferase from Salmonella paratyphi A (strain ATCC 9150 / SARB42).